A 224-amino-acid chain; its full sequence is Urease accessory protein UreF (224 aa).

Belongs to the UreF family. UreD, UreF and UreG form a complex that acts as a GTP-hydrolysis-dependent molecular chaperone, activating the urease apoprotein by helping to assemble the nickel containing metallocenter of UreC. The UreE protein probably delivers the nickel.

It localises to the cytoplasm. In terms of biological role, required for maturation of urease via the functional incorporation of the urease nickel metallocenter. This is Urease accessory protein UreF from Methylorubrum populi (strain ATCC BAA-705 / NCIMB 13946 / BJ001) (Methylobacterium populi).